We begin with the raw amino-acid sequence, 138 residues long: Large-conductance mechanosensitive channel (138 aa).

3 helical membrane-spanning segments follow: residues 15–35, 38–58, and 80–100; these read VDLA…NSIV, IIMP…MFIQ, and GNFI…FLVV.

This sequence belongs to the MscL family. As to quaternary structure, homopentamer.

It localises to the cell inner membrane. In terms of biological role, channel that opens in response to stretch forces in the membrane lipid bilayer. May participate in the regulation of osmotic pressure changes within the cell. This chain is Large-conductance mechanosensitive channel, found in Brucella ovis (strain ATCC 25840 / 63/290 / NCTC 10512).